A 528-amino-acid chain; its full sequence is Tyrosine--tRNA ligase, cytoplasmic (528 aa).

Methionine 1 bears the N-acetylmethionine mark. Glycine 2 is modified (N-acetylglycine; in Tyrosine--tRNA ligase, cytoplasmic, N-terminally processed). Residue tyrosine 39 participates in L-tyrosine binding. Residue tyrosine 39 coordinates trans-resveratrol. Residues 44 to 52 (TTGKPHVAY) carry the 'HIGH' region motif. L-tyrosine-binding residues include tyrosine 166, glutamine 170, aspartate 173, and glutamine 188. Trans-resveratrol contacts are provided by glutamine 170 and aspartate 173. At lysine 197 the chain carries N6-acetyllysine. Phosphoserine is present on serine 205. Position 206 is an N6-acetyllysine (lysine 206). The 'KMSKS' region signature appears at 222-226 (KMSSS). A Nuclear localization signal motif is present at residues 242–247 (KKKLKK). The tract at residues 339 to 363 (AAYPDPSKQKPMAKGPAKNSEPEEV) is disordered. The tRNA-binding domain maps to 364–468 (IPSRLDIRVG…AGSAPGERVF (105 aa)). Position 386 is a phosphoserine (serine 386). An N6-acetyllysine mark is found at lysine 474, lysine 482, and lysine 490.

It belongs to the class-I aminoacyl-tRNA synthetase family. As to quaternary structure, homodimer. Interacts (when binding to resveratrol) with PARP1; interaction stimulates the poly-ADP-ribosyltransferase activity of PARP1.

It localises to the cytoplasm. It is found in the nucleus. It carries out the reaction tRNA(Tyr) + L-tyrosine + ATP = L-tyrosyl-tRNA(Tyr) + AMP + diphosphate + H(+). Resveratrol strongly inhibits the tyrosine--tRNA ligase activity. Tyrosine--tRNA ligase that catalyzes the attachment of tyrosine to tRNA(Tyr) in a two-step reaction: tyrosine is first activated by ATP to form Tyr-AMP and then transferred to the acceptor end of tRNA(Tyr). Also acts as a positive regulator of poly-ADP-ribosylation in the nucleus, independently of its tyrosine--tRNA ligase activity. Activity is switched upon resveratrol-binding: resveratrol strongly inhibits the tyrosine--tRNA ligase activity and promotes relocalization to the nucleus, where YARS1 specifically stimulates the poly-ADP-ribosyltransferase activity of PARP1. This is Tyrosine--tRNA ligase, cytoplasmic (YARS1) from Pongo abelii (Sumatran orangutan).